The chain runs to 712 residues: Exocyst complex component EXO70I (712 aa).

The first 18 residues, 1–18 (MHKKQLMALLMVPQTSDS), serve as a signal peptide directing secretion. Residues 26–53 (LESAYSDLESLLRSSKQMEQNIETMETR) adopt a coiled-coil conformation. Asn-111 carries N-linked (GlcNAc...) asparagine glycosylation.

It belongs to the EXO70 family. In terms of assembly, subunit of the exocyst complex that mediates vesicle tethering during exocytosis. Interacts with VPY at the periarbuscular membrane (PAM) around the arbuscule hyphal tips. In terms of tissue distribution, present at low levels in non-mycorrhizal root tips.

Its subcellular location is the cell membrane. In terms of biological role, component of an exocyst subcomplex specifically required for periarbuscular membrane (PAM) biogenesis during arbuscular mycorrhizal (AM) symbiosis with AM fungi (e.g. Glomus versiforme), especially critical during the early branching phase of arbuscule development; probably involved in STR and STR2 delivery into the PAM. The sequence is that of Exocyst complex component EXO70I from Medicago truncatula (Barrel medic).